The sequence spans 200 residues: MYNLTSRQEQVLQLIKQYTEETGYPPTRAEIARILGFKSANAAEEHIKALARKGAIEIMPGASRGIRLTESQSGIPIVGRVAAGNPILAQEHIEDYCNIPNSFFSPSADYFLRVHGMSMKDAGILDGDLLAVHRTDQVRNGQIVVARIGEEVTVKRFKRQGNQAQVELWPENPDFKVIHVDMRDQEFSIEGLSVGVIRRD.

Positions 28 to 48 (RAEIARILGFKSANAAEEHIK) form a DNA-binding region, H-T-H motif. Residues Ser118 and Lys155 each act as for autocatalytic cleavage activity in the active site.

This sequence belongs to the peptidase S24 family. Homodimer.

The enzyme catalyses Hydrolysis of Ala-|-Gly bond in repressor LexA.. Represses a number of genes involved in the response to DNA damage (SOS response), including recA and lexA. In the presence of single-stranded DNA, RecA interacts with LexA causing an autocatalytic cleavage which disrupts the DNA-binding part of LexA, leading to derepression of the SOS regulon and eventually DNA repair. This is LexA repressor from Cellvibrio japonicus (strain Ueda107) (Pseudomonas fluorescens subsp. cellulosa).